The sequence spans 670 residues: Glycine--tRNA ligase beta subunit (670 aa).

It belongs to the class-II aminoacyl-tRNA synthetase family. As to quaternary structure, tetramer of two alpha and two beta subunits.

Its subcellular location is the cytoplasm. It catalyses the reaction tRNA(Gly) + glycine + ATP = glycyl-tRNA(Gly) + AMP + diphosphate. This Thermotoga neapolitana (strain ATCC 49049 / DSM 4359 / NBRC 107923 / NS-E) protein is Glycine--tRNA ligase beta subunit.